The sequence spans 374 residues: S-adenosylmethionine synthase 2 (374 aa).

Mg(2+) is bound at residue glutamate 11. Position 17 (histidine 17) interacts with ATP. Glutamate 45 contributes to the K(+) binding site. Positions 58 and 101 each coordinate L-methionine. ATP contacts are provided by residues 169-171 (DGK), 237-240 (SGRF), aspartate 248, 254-255 (RK), alanine 271, lysine 275, and lysine 279. Residue aspartate 248 participates in L-methionine binding. Lysine 279 contributes to the L-methionine binding site.

The protein belongs to the AdoMet synthase family. Homotetramer. Mn(2+) is required as a cofactor. It depends on Mg(2+) as a cofactor. Co(2+) serves as cofactor. The cofactor is K(+). Expressed in vegetative and reproductive tissues.

The protein localises to the cytoplasm. It carries out the reaction L-methionine + ATP + H2O = S-adenosyl-L-methionine + phosphate + diphosphate. It functions in the pathway amino-acid biosynthesis; S-adenosyl-L-methionine biosynthesis; S-adenosyl-L-methionine from L-methionine: step 1/1. Functionally, catalyzes the formation of S-adenosylmethionine from methionine and ATP. The reaction comprises two steps that are both catalyzed by the same enzyme: formation of S-adenosylmethionine (AdoMet) and triphosphate, and subsequent hydrolysis of the triphosphate. The sequence is that of S-adenosylmethionine synthase 2 (SAMS2) from Pisum sativum (Garden pea).